The chain runs to 248 residues: Orotidine 5'-phosphate decarboxylase (248 aa).

Substrate is bound by residues Asp-22, Lys-44, 71-80 (DLKFHDIPNT), Thr-131, Arg-192, Gln-201, Gly-221, and Arg-222. Lys-73 acts as the Proton donor in catalysis.

This sequence belongs to the OMP decarboxylase family. Type 1 subfamily. Homodimer.

The enzyme catalyses orotidine 5'-phosphate + H(+) = UMP + CO2. It participates in pyrimidine metabolism; UMP biosynthesis via de novo pathway; UMP from orotate: step 2/2. Its function is as follows. Catalyzes the decarboxylation of orotidine 5'-monophosphate (OMP) to uridine 5'-monophosphate (UMP). The polypeptide is Orotidine 5'-phosphate decarboxylase (Photorhabdus laumondii subsp. laumondii (strain DSM 15139 / CIP 105565 / TT01) (Photorhabdus luminescens subsp. laumondii)).